Consider the following 213-residue polypeptide: Uridine kinase (213 aa).

15–22 (GASASGKS) is an ATP binding site.

It belongs to the uridine kinase family.

It localises to the cytoplasm. It carries out the reaction uridine + ATP = UMP + ADP + H(+). The enzyme catalyses cytidine + ATP = CMP + ADP + H(+). The protein operates within pyrimidine metabolism; CTP biosynthesis via salvage pathway; CTP from cytidine: step 1/3. Its pathway is pyrimidine metabolism; UMP biosynthesis via salvage pathway; UMP from uridine: step 1/1. The polypeptide is Uridine kinase (Proteus mirabilis (strain HI4320)).